The chain runs to 88 residues: HssA/B-like protein 64 (88 aa).

The span at Met-1–Phe-24 shows a compositional bias: low complexity. 2 disordered regions span residues Met-1 to Gly-25 and Gly-45 to Cys-88. Gly residues predominate over residues Ala-56 to Gly-66.

It belongs to the hssA/B family.

In Dictyostelium discoideum (Social amoeba), this protein is HssA/B-like protein 64 (hssl64).